The chain runs to 416 residues: Dihydrolipoyllysine-residue succinyltransferase component of 2-oxoglutarate dehydrogenase complex (416 aa).

The Lipoyl-binding domain maps to 3–78; sequence IVDVKVPQLS…VADEIIAKID (76 aa). The residue at position 44 (K44) is an N6-lipoyllysine. A Peripheral subunit-binding (PSBD) domain is found at 115-152; that stretch reads VAMPSAAKLMAEAGLSAGQVAGTGKDGRITKGDALAAA. Residues H387 and D391 contribute to the active site.

This sequence belongs to the 2-oxoacid dehydrogenase family. In terms of assembly, forms a 24-polypeptide structural core with octahedral symmetry. Part of the 2-oxoglutarate dehydrogenase (OGDH) complex composed of E1 (2-oxoglutarate dehydrogenase), E2 (dihydrolipoamide succinyltransferase) and E3 (dihydrolipoamide dehydrogenase); the complex contains multiple copies of the three enzymatic components (E1, E2 and E3). The cofactor is (R)-lipoate.

The enzyme catalyses N(6)-[(R)-dihydrolipoyl]-L-lysyl-[protein] + succinyl-CoA = N(6)-[(R)-S(8)-succinyldihydrolipoyl]-L-lysyl-[protein] + CoA. It participates in amino-acid degradation; L-lysine degradation via saccharopine pathway; glutaryl-CoA from L-lysine: step 6/6. Its function is as follows. E2 component of the 2-oxoglutarate dehydrogenase (OGDH) complex which catalyzes the second step in the conversion of 2-oxoglutarate to succinyl-CoA and CO(2). The protein is Dihydrolipoyllysine-residue succinyltransferase component of 2-oxoglutarate dehydrogenase complex (sucB) of Cupriavidus necator (strain ATCC 17699 / DSM 428 / KCTC 22496 / NCIMB 10442 / H16 / Stanier 337) (Ralstonia eutropha).